Here is a 29-residue protein sequence, read N- to C-terminus: Cytochrome b6-f complex subunit 8 (29 aa).

The chain crosses the membrane as a helical span at residues 3–23 (IVNIAWAALMVVSTFSLTLVV).

It belongs to the PetN family. In terms of assembly, the 4 large subunits of the cytochrome b6-f complex are cytochrome b6, subunit IV (17 kDa polypeptide, PetD), cytochrome f and the Rieske protein, while the 4 small subunits are PetG, PetL, PetM and PetN. The complex functions as a dimer.

Its subcellular location is the plastid. It localises to the chloroplast thylakoid membrane. Component of the cytochrome b6-f complex, which mediates electron transfer between photosystem II (PSII) and photosystem I (PSI), cyclic electron flow around PSI, and state transitions. The protein is Cytochrome b6-f complex subunit 8 of Huperzia lucidula (Shining clubmoss).